The chain runs to 353 residues: Photosystem II D2 protein (353 aa).

The residue at position 2 (Thr2) is an N-acetylthreonine. A Phosphothreonine modification is found at Thr2. Residues 41 to 61 form a helical membrane-spanning segment; that stretch reads CAYFAVGGWFTGTTFVTSWYT. Residue His118 coordinates chlorophyll a. Residues 125–141 traverse the membrane as a helical segment; sequence GFMLRQFELARSVQLRP. The pheophytin a site is built by Gln130 and Asn143. Residues 153-166 traverse the membrane as a helical segment; it reads VFVSVFLIYPLGQS. His198 provides a ligand contact to chlorophyll a. Residues 208-228 form a helical membrane-spanning segment; the sequence is AALLCAIHGATVENTLFEDGD. Positions 215 and 262 each coordinate a plastoquinone. Residue His215 participates in Fe cation binding. Fe cation is bound at residue His269. The chain crosses the membrane as a helical span at residues 279-295; the sequence is GLWMSALGVVGLALNLR.

Belongs to the reaction center PufL/M/PsbA/D family. As to quaternary structure, PSII is composed of 1 copy each of membrane proteins PsbA, PsbB, PsbC, PsbD, PsbE, PsbF, PsbH, PsbI, PsbJ, PsbK, PsbL, PsbM, PsbT, PsbX, PsbY, PsbZ, Psb30/Ycf12, at least 3 peripheral proteins of the oxygen-evolving complex and a large number of cofactors. It forms dimeric complexes. It depends on The D1/D2 heterodimer binds P680, chlorophylls that are the primary electron donor of PSII, and subsequent electron acceptors. It shares a non-heme iron and each subunit binds pheophytin, quinone, additional chlorophylls, carotenoids and lipids. There is also a Cl(-1) ion associated with D1 and D2, which is required for oxygen evolution. The PSII complex binds additional chlorophylls, carotenoids and specific lipids. as a cofactor.

It is found in the plastid. Its subcellular location is the chloroplast thylakoid membrane. It carries out the reaction 2 a plastoquinone + 4 hnu + 2 H2O = 2 a plastoquinol + O2. Its function is as follows. Photosystem II (PSII) is a light-driven water:plastoquinone oxidoreductase that uses light energy to abstract electrons from H(2)O, generating O(2) and a proton gradient subsequently used for ATP formation. It consists of a core antenna complex that captures photons, and an electron transfer chain that converts photonic excitation into a charge separation. The D1/D2 (PsbA/PsbD) reaction center heterodimer binds P680, the primary electron donor of PSII as well as several subsequent electron acceptors. D2 is needed for assembly of a stable PSII complex. The protein is Photosystem II D2 protein of Solanum bulbocastanum (Wild potato).